Reading from the N-terminus, the 215-residue chain is UPF0502 protein YceH (215 aa).

K80 carries the post-translational modification N6-acetyllysine.

The protein belongs to the UPF0502 family.

The protein is UPF0502 protein YceH of Shigella boydii serotype 18 (strain CDC 3083-94 / BS512).